The sequence spans 283 residues: GTP cyclohydrolase MptA (283 aa).

Belongs to the GTP cyclohydrolase IV family. In terms of assembly, homodimer. It depends on Fe(2+) as a cofactor.

It carries out the reaction GTP + H2O = 7,8-dihydroneopterin 2',3'-cyclic phosphate + formate + diphosphate + H(+). The protein operates within cofactor biosynthesis; 5,6,7,8-tetrahydromethanopterin biosynthesis. Converts GTP to 7,8-dihydro-D-neopterin 2',3'-cyclic phosphate, the first intermediate in the biosynthesis of coenzyme methanopterin. The polypeptide is GTP cyclohydrolase MptA (Aeropyrum pernix (strain ATCC 700893 / DSM 11879 / JCM 9820 / NBRC 100138 / K1)).